The primary structure comprises 1137 residues: 2'-5'-oligoadenylate synthase 3 (1137 aa).

M1 is modified (N-acetylmethionine). Positions 6–341 are OAS domain 1; that stretch reads TPAGALDKLV…GALVQPWEGP (336 aa). 2 interaction with dsRNA regions span residues 12-56 and 185-199; these read DKLV…VIRI and ELRK…VKLK. Positions 342-461 are linker; sequence GLPCAGILDL…GSQMGPDLSQ (120 aa). The span at 434-453 shows a compositional bias: polar residues; it reads QSTASSNTPPGHSSMSTAGS. Positions 434–462 are disordered; that stretch reads QSTASSNTPPGHSSMSTAGSQMGPDLSQI. OAS domain regions lie at residues 462–792 and 800–1134; these read IPSK…PWDV and TPAQ…WPVK. S854 contacts ATP. Mg(2+)-binding residues include D866, D868, and D938. The ATP site is built by R997, K1000, and Q1019.

Belongs to the 2-5A synthase family. As to quaternary structure, monomer. Requires Mg(2+) as cofactor.

Its subcellular location is the cytoplasm. It is found in the nucleus. It carries out the reaction 3 ATP = 5'-triphosphoadenylyl-(2'-&gt;5')-adenylyl-(2'-&gt;5')-adenosine + 2 diphosphate. With respect to regulation, produced as a latent enzyme which is activated by dsRNA generated during the course of viral infection. Strongly activated by long dsRNAs at least 50 nucleotides in length. ssRNA does not activate the enzyme. Its function is as follows. Interferon-induced, dsRNA-activated antiviral enzyme which plays a critical role in cellular innate antiviral response. In addition, it may also play a role in other cellular processes such as apoptosis, cell growth, differentiation and gene regulation. Synthesizes preferentially dimers of 2'-5'-oligoadenylates (2-5A) from ATP which then bind to the inactive monomeric form of ribonuclease L (RNase L) leading to its dimerization and subsequent activation. Activation of RNase L leads to degradation of cellular as well as viral RNA, resulting in the inhibition of protein synthesis, thus terminating viral replication. Can mediate the antiviral effect via the classical RNase L-dependent pathway or an alternative antiviral pathway independent of RNase L. This is 2'-5'-oligoadenylate synthase 3 (Oas3) from Rattus norvegicus (Rat).